A 305-amino-acid chain; its full sequence is Peroxisome biogenesis factor 2 (305 aa).

The Peroxisomal matrix segment spans residues 1–15 (MASRKENAKSANRVL). A helical membrane pass occupies residues 16–42 (RISQLDALELNKALEQLVWSQFTQCFH). The Cytoplasmic portion of the chain corresponds to 43-48 (GFKPGL). Residues 49 to 74 (LARFEPEVKACLWVFLWRFTIYSKNA) form a helical membrane-spanning segment. The Peroxisomal matrix segment spans residues 75–98 (TVGQSVLNIKYKNDFSPNLRYQPP). K84 carries the N6-acetyllysine modification. A helical transmembrane segment spans residues 99–125 (SKNQKIWYAVCTIGGRWLEERCYDLFR). At 126 to 133 (NHHLASFG) the chain is on the cytoplasmic side. The chain crosses the membrane as a helical span at residues 134–160 (KVKQCVNFVIGLLKLGGLINFLIFLQR). The Peroxisomal matrix segment spans residues 161-187 (GKFATLTERLLGIHSVFCKPQNICEVG). A helical transmembrane segment spans residues 188-211 (FEYMNRELLWHGFAEFLIFLLPLI). At 212–305 (NVQKLKAKLS…GIEMSEVNAL (94 aa)) the chain is on the cytoplasmic side. Zn(2+) contacts are provided by C244, C247, C259, H261, C264, C267, C280, and C283. The RING-type zinc finger occupies 244 to 284 (CALCGEWPTMPHTIGCEHIFCYFCAKSSFLFDVYFTCPKCG).

It belongs to the pex2/pex10/pex12 family. Component of the PEX2-PEX10-PEX12 retrotranslocation channel, composed of PEX2, PEX10 and PEX12. Forms intramolecular and intermolecular disulfide bonds in response to reactive oxygen species (ROS), promoting higher stability.

The protein resides in the peroxisome membrane. It carries out the reaction [E2 ubiquitin-conjugating enzyme]-S-ubiquitinyl-L-cysteine + [acceptor protein]-L-cysteine = [E2 ubiquitin-conjugating enzyme]-L-cysteine + [acceptor protein]-S-ubiquitinyl-L-cysteine.. The catalysed reaction is S-ubiquitinyl-[E2 ubiquitin-conjugating enzyme]-L-cysteine + [acceptor protein]-L-lysine = [E2 ubiquitin-conjugating enzyme]-L-cysteine + N(6)-ubiquitinyl-[acceptor protein]-L-lysine.. The protein operates within protein modification; protein ubiquitination. Its function is as follows. E3 ubiquitin-protein ligase component of a retrotranslocation channel required for peroxisome organization by mediating export of the PEX5 receptor from peroxisomes to the cytosol, thereby promoting PEX5 recycling. The retrotranslocation channel is composed of PEX2, PEX10 and PEX12; each subunit contributing transmembrane segments that coassemble into an open channel that specifically allows the passage of PEX5 through the peroxisomal membrane. PEX2 also regulates peroxisome organization by acting as a E3 ubiquitin-protein ligase. PEX2 ubiquitinates PEX5 during its passage through the retrotranslocation channel: catalyzes monoubiquitination of PEX5 at 'Cys-11', a modification that acts as a signal for PEX5 extraction into the cytosol. Required for pexophagy in response to starvation by mediating ubiquitination of peroxisomal proteins, such as PEX5 and ABCD3/PMP70. Also involved in the response to reactive oxygen species (ROS) by mediating 'Lys-48'-linked polyubiquitination and subsequent degradation of PNPLA2/ATGL, thereby regulating lipolysis. The sequence is that of Peroxisome biogenesis factor 2 from Homo sapiens (Human).